The primary structure comprises 551 residues: Methionine--tRNA ligase (551 aa).

A 'HIGH' region motif is present at residues 12–22 (PYANGPLHFGH). Residues C144, C147, C157, and C160 each coordinate Zn(2+). The 'KMSKS' region motif lies at 330-334 (QFSKS). An ATP-binding site is contributed by K333.

The protein belongs to the class-I aminoacyl-tRNA synthetase family. MetG type 1 subfamily. As to quaternary structure, monomer. The cofactor is Zn(2+).

The protein localises to the cytoplasm. It carries out the reaction tRNA(Met) + L-methionine + ATP = L-methionyl-tRNA(Met) + AMP + diphosphate. In terms of biological role, is required not only for elongation of protein synthesis but also for the initiation of all mRNA translation through initiator tRNA(fMet) aminoacylation. This chain is Methionine--tRNA ligase (metG), found in Chlamydia pneumoniae (Chlamydophila pneumoniae).